A 108-amino-acid chain; its full sequence is MNEVRFHDLVDAVQQQVEDAFDDSGLDLDLENAGGVLTVRFENGSQLILSRQAPLYQLWVAAKSGGFHFDYDETSGLWRHDASREPLGALLNRATLEQGGEDVEFPGL.

This sequence belongs to the frataxin family.

In terms of biological role, involved in iron-sulfur (Fe-S) cluster assembly. May act as a regulator of Fe-S biogenesis. This Pseudomonas paraeruginosa (strain DSM 24068 / PA7) (Pseudomonas aeruginosa (strain PA7)) protein is Iron-sulfur cluster assembly protein CyaY.